A 132-amino-acid polypeptide reads, in one-letter code: Small ribosomal subunit protein uS8 (132 aa).

It belongs to the universal ribosomal protein uS8 family. Part of the 30S ribosomal subunit. Contacts proteins S5 and S12.

Functionally, one of the primary rRNA binding proteins, it binds directly to 16S rRNA central domain where it helps coordinate assembly of the platform of the 30S subunit. The protein is Small ribosomal subunit protein uS8 of Cereibacter sphaeroides (strain ATCC 17029 / ATH 2.4.9) (Rhodobacter sphaeroides).